We begin with the raw amino-acid sequence, 190 residues long: Molybdenum cofactor guanylyltransferase (190 aa).

GTP contacts are provided by residues L10–G12, K23, N51, D69, and D99. D99 is a Mg(2+) binding site.

Belongs to the MobA family. As to quaternary structure, monomer. Mg(2+) serves as cofactor.

It is found in the cytoplasm. The catalysed reaction is Mo-molybdopterin + GTP + H(+) = Mo-molybdopterin guanine dinucleotide + diphosphate. Functionally, transfers a GMP moiety from GTP to Mo-molybdopterin (Mo-MPT) cofactor (Moco or molybdenum cofactor) to form Mo-molybdopterin guanine dinucleotide (Mo-MGD) cofactor. The sequence is that of Molybdenum cofactor guanylyltransferase from Mannheimia succiniciproducens (strain KCTC 0769BP / MBEL55E).